A 265-amino-acid polypeptide reads, in one-letter code: Indole-3-glycerol phosphate synthase (265 aa).

The protein belongs to the TrpC family.

It carries out the reaction 1-(2-carboxyphenylamino)-1-deoxy-D-ribulose 5-phosphate + H(+) = (1S,2R)-1-C-(indol-3-yl)glycerol 3-phosphate + CO2 + H2O. The protein operates within amino-acid biosynthesis; L-tryptophan biosynthesis; L-tryptophan from chorismate: step 4/5. This Chromobacterium violaceum (strain ATCC 12472 / DSM 30191 / JCM 1249 / CCUG 213 / NBRC 12614 / NCIMB 9131 / NCTC 9757 / MK) protein is Indole-3-glycerol phosphate synthase.